The sequence spans 510 residues: MIWHVQNENFILDSTRIFMKAFHLLLFNGSFIFPECILIFGLILLLMIDLTSDQKDRPWFYFISSTSLVISITALLFRWREEPIISFSGNFQTNNFNEIFQFLILLCSTLCIPLSVEYIECTEMAITEFLLFVLTATLGGMFLCGANDLITIFVAPECFSLCSYLLSGYTKRDLRSNEATMKYLLMGGASSSILVHGFSWLYGSSGGEIELQEIVNGLINTQMYNSPGISIALIFITVGLGFKLSPAPFHQWTPDVYEGSPTPVVAFLSVTSKVAASALATRILDIPFYFSSNEWHLLLEILAILSMILGNLLAITQTSMKRMLAYSSIGQIGYVIIGIIVGDSNDGYASMITYMLFYISMNLGTFACIVLFGLRTGTDNIRDYAGLYTKDPFLALSLALCLLSLGGLPPLAGFFGKLYLFWCGWQAGLYFLVSIGLLTSVLSIYYYLKIIKLLMTGRNQEITPYVRNYRRSPLRSNNSIELSMTVCVIASTIPGISMNPILAIAQDTLF.

Helical transmembrane passes span 31 to 51 (FIFPECILIFGLILLLMIDLT), 59 to 79 (WFYFISSTSLVISITALLFRW), 99 to 119 (IFQFLILLCSTLCIPLSVEYI), 124 to 144 (MAITEFLLFVLTATLGGMFLC), 149 to 169 (LITIFVAPECFSLCSYLLSGY), 183 to 203 (YLLMGGASSSILVHGFSWLYG), 229 to 249 (ISIALIFITVGLGFKLSPAPF), 295 to 315 (WHLLLEILAILSMILGNLLAI), 323 to 343 (MLAYSSIGQIGYVIIGIIVGD), 354 to 374 (YMLFYISMNLGTFACIVLFGL), 395 to 415 (ALSLALCLLSLGGLPPLAGFF), and 418 to 438 (LYLFWCGWQAGLYFLVSIGLL).

The protein belongs to the complex I subunit 2 family. NDH is composed of at least 16 different subunits, 5 of which are encoded in the nucleus.

It is found in the plastid. The protein resides in the chloroplast thylakoid membrane. The enzyme catalyses a plastoquinone + NADH + (n+1) H(+)(in) = a plastoquinol + NAD(+) + n H(+)(out). It carries out the reaction a plastoquinone + NADPH + (n+1) H(+)(in) = a plastoquinol + NADP(+) + n H(+)(out). Functionally, NDH shuttles electrons from NAD(P)H:plastoquinone, via FMN and iron-sulfur (Fe-S) centers, to quinones in the photosynthetic chain and possibly in a chloroplast respiratory chain. The immediate electron acceptor for the enzyme in this species is believed to be plastoquinone. Couples the redox reaction to proton translocation, and thus conserves the redox energy in a proton gradient. The polypeptide is NAD(P)H-quinone oxidoreductase subunit 2 A, chloroplastic (Saccharum officinarum (Sugarcane)).